Consider the following 316-residue polypeptide: Pantothenate kinase (316 aa).

95-102 is a binding site for ATP; that stretch reads GSVAVGKS.

Belongs to the prokaryotic pantothenate kinase family.

It is found in the cytoplasm. It catalyses the reaction (R)-pantothenate + ATP = (R)-4'-phosphopantothenate + ADP + H(+). The protein operates within cofactor biosynthesis; coenzyme A biosynthesis; CoA from (R)-pantothenate: step 1/5. This Escherichia coli O17:K52:H18 (strain UMN026 / ExPEC) protein is Pantothenate kinase.